Here is a 105-residue protein sequence, read N- to C-terminus: Small cysteine and glycine repeat-containing protein 4 (105 aa).

A 14 X 2 AA repeats of CG region spans residues 4-87 (CGCGSCGGCG…RRTCGSCGCG (84 aa)).

This sequence belongs to the KRTAP type 28 family.

Functionally, in the hair cortex, hair keratin intermediate filaments are embedded in an interfilamentous matrix, consisting of hair keratin-associated proteins (KRTAP), which are essential for the formation of a rigid and resistant hair shaft through their extensive disulfide bond cross-linking with abundant cysteine residues of hair keratins. The matrix proteins include the high-sulfur and high-glycine-tyrosine keratins. The chain is Small cysteine and glycine repeat-containing protein 4 from Homo sapiens (Human).